A 145-amino-acid chain; its full sequence is Putative antiporter subunit mnhG2 (145 aa).

The next 3 membrane-spanning stretches (helical) occupy residues isoleucine 11–valine 31, valine 51–valine 71, and arginine 72–alanine 92.

It belongs to the CPA3 antiporters (TC 2.A.63) subunit G family. May form a heterooligomeric complex that consists of seven subunits: mnhA2, mnhB2, mnhC2, mnhD2, mnhE2, mnhF2 and mnhG2.

The protein localises to the cell membrane. In Staphylococcus aureus (strain bovine RF122 / ET3-1), this protein is Putative antiporter subunit mnhG2 (mnhG2).